Reading from the N-terminus, the 66-residue chain is Large ribosomal subunit protein bL31 (66 aa).

4 residues coordinate Zn(2+): Cys-16, Cys-18, Cys-36, and Cys-39.

It belongs to the bacterial ribosomal protein bL31 family. Type A subfamily. Part of the 50S ribosomal subunit. Requires Zn(2+) as cofactor.

Functionally, binds the 23S rRNA. The polypeptide is Large ribosomal subunit protein bL31 (Priestia megaterium (Bacillus megaterium)).